The sequence spans 1228 residues: Minor fimbrium subunit Mfa5 (1228 aa).

The N-terminal stretch at 1-25 (MMKRYTIILAVFLLFCTVFTFQIKA) is a signal peptide. The 124-residue stretch at 144-267 (DVVMVIDQSS…QYPVKNVTTA (124 aa)) folds into the VWFA domain.

Minor fimbriae are composed of a structural subunit, most often Mfa1, and the accessory subunits Mfa3, Mfa4 and Mfa5. Fimbrium assembly occurs by linear, head-to-tail oligomerization of fimbrial subunits. This is mediated via insertion of a C-terminal beta-strand from one subunit into a groove in the N-terminal domain of the following subunit.

It is found in the fimbrium. Its function is as follows. Accessory subunit of the minor fimbriae. These filamentous pili are attached to the cell surface; they mediate biofilm formation, adhesion onto host cells and onto other bacteria that are part of the oral microbiome. They play an important role in invasion of periodontal tissues and are recognized as major virulence factors. Fimbrium subunits from different strains have highly divergent sequences, and this correlates with pathogenicity. The protein is Minor fimbrium subunit Mfa5 of Porphyromonas gingivalis (strain ATCC 33277 / DSM 20709 / CIP 103683 / JCM 12257 / NCTC 11834 / 2561).